We begin with the raw amino-acid sequence, 662 residues long: Probable quinol oxidase subunit 1 (662 aa).

2 consecutive transmembrane segments (helical) span residues 14 to 34 (WMIT…IAVI) and 58 to 78 (LMYL…ALLL). H102 is a binding site for Fe(II)-heme a. 8 helical membrane-spanning segments follow: residues 103-123 (GVIM…NVVV), 140-160 (ISFW…IIGG), 187-207 (VAIQ…FVTI), 228-248 (FITT…LALM), 273-293 (FFWV…FGIY), 311-331 (MVWA…HHFF), 336-356 (GALI…PTGV), and 376-396 (MLFS…GVML). Cu cation-binding residues include H279, Y283, H328, and H329. Positions 279 to 283 (HPEVY) form a cross-link, 1'-histidyl-3'-tyrosine (His-Tyr). H414 contacts heme a3. The next 5 helical transmembrane spans lie at 415–435 (FHYT…IFWY), 451–471 (CFWL…ILGL), 492–512 (VIST…VVSI), 586–605 (THTG…FLIF), and 609–628 (IPAA…QSFV). Fe(II)-heme a is bound at residue H416.

Belongs to the heme-copper respiratory oxidase family. Requires Cu cation as cofactor. It depends on ferriheme a as a cofactor. The cofactor is Heme A3..

It localises to the cell membrane. It catalyses the reaction 2 a quinol + O2 = 2 a quinone + 2 H2O. It participates in energy metabolism; oxidative phosphorylation. In terms of biological role, catalyzes quinol oxidation with the concomitant reduction of oxygen to water. The chain is Probable quinol oxidase subunit 1 (qoxB) from Staphylococcus haemolyticus (strain JCSC1435).